The chain runs to 271 residues: Phosphatidylinositol transfer protein alpha isoform (271 aa).

Positions 59, 61, 86, 90, 97, and 195 each coordinate a 1,2-diacyl-sn-glycero-3-phospho-(1D-myo-inositol). K216 carries the N6-acetyllysine modification. Basic and acidic residues predominate over residues 251–264 (TKRQLDEMRQKDPV). The interval 251 to 271 (TKRQLDEMRQKDPVKGMTADD) is disordered.

Belongs to the PtdIns transfer protein family. PI transfer class I subfamily. Phosphorylated by PKC in a calcium and phosphatidylserine-dependent manner. Expressed in a wide range of tissues.

It is found in the cytoplasm. Its subcellular location is the nucleus. The catalysed reaction is a 1,2-diacyl-sn-glycero-3-phosphocholine(in) = a 1,2-diacyl-sn-glycero-3-phosphocholine(out). It carries out the reaction a 1,2-diacyl-sn-glycero-3-phospho-(1D-myo-inositol)(in) = a 1,2-diacyl-sn-glycero-3-phospho-(1D-myo-inositol)(out). Phosphatidylinositol transfer activity is inhibited by N-ethylmaleimide. Its function is as follows. Catalyzes the transfer of phosphatidylinositol (PI) and phosphatidylcholine (PC) between membranes. Shows a preference for PI and PC containing shorter saturated or monosaturated acyl chains at the sn-1 and sn-2 positions. Preference order for PC is C16:1 &gt; C16:0 &gt; C18:1 &gt; C18:0 &gt; C20:4 and for PI is C16:1 &gt; C16:0 &gt; C18:1 &gt; C18:0 &gt; C20:4 &gt; C20:3. This is Phosphatidylinositol transfer protein alpha isoform (Pitpna) from Rattus norvegicus (Rat).